The following is a 151-amino-acid chain: Large-conductance mechanosensitive channel (151 aa).

The next 3 helical transmembrane spans lie at 14–34, 38–58, and 86–106; these read VVDM…VNTL, VLMP…LYLI, and GLFL…FLLV.

This sequence belongs to the MscL family. Homopentamer.

It localises to the cell inner membrane. Its function is as follows. Channel that opens in response to stretch forces in the membrane lipid bilayer. May participate in the regulation of osmotic pressure changes within the cell. This chain is Large-conductance mechanosensitive channel, found in Pelodictyon phaeoclathratiforme (strain DSM 5477 / BU-1).